We begin with the raw amino-acid sequence, 73 residues long: Antitoxin VapB20 (73 aa).

Antitoxin component of a type II toxin-antitoxin (TA) system. Upon expression in E.coli neutralizes the toxic effect of cognate toxin VapC20. This chain is Antitoxin VapB20 (vapB20), found in Mycobacterium tuberculosis (strain ATCC 25618 / H37Rv).